A 250-amino-acid chain; its full sequence is Pyrroloquinoline-quinone synthase (250 aa).

It belongs to the PqqC family.

The catalysed reaction is 6-(2-amino-2-carboxyethyl)-7,8-dioxo-1,2,3,4,7,8-hexahydroquinoline-2,4-dicarboxylate + 3 O2 = pyrroloquinoline quinone + 2 H2O2 + 2 H2O + H(+). It functions in the pathway cofactor biosynthesis; pyrroloquinoline quinone biosynthesis. In terms of biological role, ring cyclization and eight-electron oxidation of 3a-(2-amino-2-carboxyethyl)-4,5-dioxo-4,5,6,7,8,9-hexahydroquinoline-7,9-dicarboxylic-acid to PQQ. The polypeptide is Pyrroloquinoline-quinone synthase (Xanthomonas campestris pv. campestris (strain B100)).